The primary structure comprises 577 residues: Aspartate--tRNA(Asp/Asn) ligase (577 aa).

Position 171 (Glu171) interacts with L-aspartate. The aspartate stretch occupies residues 195–198; it reads QLFK. Residue Arg217 coordinates L-aspartate. Residues 217-219 and Gln226 each bind ATP; that span reads RDE. Residue His444 coordinates L-aspartate. Position 474 (Glu474) interacts with ATP. Arg481 is a binding site for L-aspartate. 526–529 contributes to the ATP binding site; it reads GFDR.

The protein belongs to the class-II aminoacyl-tRNA synthetase family. Type 1 subfamily. As to quaternary structure, homodimer.

It is found in the cytoplasm. It carries out the reaction tRNA(Asx) + L-aspartate + ATP = L-aspartyl-tRNA(Asx) + AMP + diphosphate. Its function is as follows. Aspartyl-tRNA synthetase with relaxed tRNA specificity since it is able to aspartylate not only its cognate tRNA(Asp) but also tRNA(Asn). Is 1.7 times more efficient at aminoacylating tRNA(Asp) over tRNA(Asn). Reaction proceeds in two steps: L-aspartate is first activated by ATP to form Asp-AMP and then transferred to the acceptor end of tRNA(Asp/Asn). The sequence is that of Aspartate--tRNA(Asp/Asn) ligase from Helicobacter pylori (strain ATCC 700392 / 26695) (Campylobacter pylori).